We begin with the raw amino-acid sequence, 770 residues long: Low-density lipoprotein receptor-related protein 3 (770 aa).

A signal peptide spans 1-36; it reads MEKRAAAGLEGAPGARAQLAVVCLVNIFLTGRLSSA. At 37 to 496 the chain is on the extracellular side; sequence VPALAACSGK…HGCLAAVPRK (460 aa). Intrachain disulfides connect Cys43–Cys72, Cys99–Cys120, Cys166–Cys178, Cys173–Cys191, Cys185–Cys200, Cys212–Cys227, Cys219–Cys240, Cys234–Cys249, and Cys254–Cys282. One can recognise a CUB 1 domain in the interval 43 to 159; it reads CSGKLEQHTE…QGFRLSYIRG (117 aa). N-linked (GlcNAc...) asparagine glycosylation is present at Asn71. LDL-receptor class A domains are found at residues 165–201 and 211–250; these read SCQA…GNCS and LCPG…AGCP. A glycan (N-linked (GlcNAc...) asparagine) is linked at Asn199. The CUB 2 domain occupies 254–365; it reads CGRRLGSFYG…HGFNATYQVK (112 aa). The N-linked (GlcNAc...) asparagine glycan is linked to Asn359. LDL-receptor class A domains lie at 415-453 and 454-490; these read ACPP…KNCF and SCQP…HGCL. Intrachain disulfides connect Cys416–Cys430, Cys423–Cys443, Cys437–Cys452, Cys455–Cys467, Cys462–Cys480, and Cys474–Cys489. A helical membrane pass occupies residues 497 to 517; the sequence is VITAALIGSLVCGLLLVIALG. At 518–770 the chain is on the cytoplasmic side; sequence CAFKLYSLRT…ASDDEALLVC (253 aa). Positions 635-770 are disordered; that stretch reads LGDGFLQPAP…ASDDEALLVC (136 aa). Residues 689-707 are compositionally biased toward basic and acidic residues; sequence RDPECRPVDKDRKVCREPL. Polar residues predominate over residues 729-738; sequence QVSTASSTLG. Over residues 761-770 the composition is skewed to acidic residues; that stretch reads ASDDEALLVC.

Belongs to the LDLR family. Binds GGA1 and GGA2. Widely expressed. Highly expressed in skeletal muscle and ovary. Expressed at intermediate level in heart, brain, liver, pancreas, prostate and small intestine. Weakly expressed in testis, colon and leukocyte.

Its subcellular location is the membrane. It localises to the coated pit. Probable receptor, which may be involved in the internalization of lipophilic molecules and/or signal transduction. Its precise role is however unclear, since it does not bind to very low density lipoprotein (VLDL) or to LRPAP1 in vitro. The protein is Low-density lipoprotein receptor-related protein 3 (LRP3) of Homo sapiens (Human).